A 557-amino-acid chain; its full sequence is Iron-sulfur cluster assembly SufBD family protein ABCI8, chloroplastic (557 aa).

The segment at 1 to 47 (MASLLANGISSFSPQPTSDSSKSPKGFHPKPESLKFPSPKSLNPTRP) is disordered. The N-terminal 52 residues, 1-52 (MASLLANGISSFSPQPTSDSSKSPKGFHPKPESLKFPSPKSLNPTRPIFKLR), are a transit peptide targeting the chloroplast. The span at 10 to 24 (SSFSPQPTSDSSKSP) shows a compositional bias: low complexity.

This sequence belongs to the iron-sulfur cluster assembly SufBD family.

The protein localises to the plastid. It localises to the chloroplast. Functionally, involved in light signaling, probably by mediating the transport and correct distribution of protoporphyrin IX, a chlorophyll precursor, in response to far-red light. The polypeptide is Iron-sulfur cluster assembly SufBD family protein ABCI8, chloroplastic (ABCI8) (Arabidopsis thaliana (Mouse-ear cress)).